The primary structure comprises 275 residues: MTDDKDVLRDVWFGRIPTCFTLCQDEITEREAEPYYLLLPRVSYLTLVTDKVKKHFQKVMRQEDISEIWFEYEGTPLKWHYPIGLLFDLLASSSALPWNITVHFKSFPEKDLLHCPSKDAIEAHFMSCMKEADALKHKSQVINEMQKKDHKQLWMGLQNDRFDQFWAINRKLMEYPAEENGFRYIPFRIYQTTTERPFIQKLFRPVAADGQLHTLGDLLKEVCPSAVDPEDGEKKNQVMIHGIEPMLETPLQWLSEHLSYPDNFLHISIIPQPTD.

Met1 is subject to N-acetylmethionine. Lys130 participates in a covalent cross-link: Glycyl lysine isopeptide (Lys-Gly) (interchain with G-Cter in ATG12).

It belongs to the ATG5 family. As to quaternary structure, forms a conjugate with ATG12. Part of the minor complex composed of 4 sets of ATG12-ATG5 and ATG16L1 (400 kDa); this complex interacts with ATG3 leading to disruption of ATG7 interaction and promotion of ATG8-like proteins lipidation. Forms an 800-kDa complex composed of ATG12-ATG5 and ATG16L2. The ATG12-ATG5 conjugate interacts with RAB33A; this interaction is bridged by ATG16L1 and promotes ATG12-ATG5-ATG16L1 complex recruitment to phagophores. Interacts with TECPR1; the interaction is direct and does not take place when ATG16L1 is associated with the ATG5-ATG12 conjugate. Interacts with DHX58/RIG-1, IFIH1/MDA5 and MAVS/IPS-1 in monomeric form as well as in ATG12-ATG5 conjugate form. The interaction with MAVS is further enhanced upon vesicular stomatitis virus (VSV) infection. Interacts with ATG3. Interacts with ATG7 and ATG10. Interacts with FADD. Interacts with Bassoon/BSN; this interaction is important for the regulation of presynaptic autophagy. Interacts with ATG16L2. Conjugated to ATG12; which is essential for autophagy, but is not required for association with isolation membrane. In terms of processing, acetylated by EP300.

The protein resides in the cytoplasm. It is found in the preautophagosomal structure membrane. Involved in autophagic vesicle formation. Conjugation with ATG12, through a ubiquitin-like conjugating system involving ATG7 as an E1-like activating enzyme and ATG10 as an E2-like conjugating enzyme, is essential for its function. The ATG12-ATG5 conjugate acts as an E3-like enzyme which is required for lipidation of ATG8 family proteins and their association to the vesicle membranes. Involved in mitochondrial quality control after oxidative damage, and in subsequent cellular longevity. Plays a critical role in multiple aspects of lymphocyte development and is essential for both B and T lymphocyte survival and proliferation. Required for optimal processing and presentation of antigens for MHC II. Involved in the maintenance of axon morphology and membrane structures, as well as in normal adipocyte differentiation. Promotes primary ciliogenesis through removal of OFD1 from centriolar satellites and degradation of IFT20 via the autophagic pathway. As part of the ATG8 conjugation system with ATG12 and ATG16L1, required for recruitment of LRRK2 to stressed lysosomes and induction of LRRK2 kinase activity in response to lysosomal stress. In terms of biological role, may play an important role in the apoptotic process, possibly within the modified cytoskeleton. Its expression is a relatively late event in the apoptotic process, occurring downstream of caspase activity. Plays a crucial role in IFN-gamma-induced autophagic cell death by interacting with FADD. This Pongo abelii (Sumatran orangutan) protein is Autophagy protein 5.